We begin with the raw amino-acid sequence, 573 residues long: Probable pectinesterase/pectinesterase inhibitor 41 (573 aa).

Residues 1 to 22 (MLSLKLFLVTLFLSLQTLFIAS) form the signal peptide. A pectinesterase inhibitor 41 region spans residues 25-184 (LLPSNSSSTI…TKLFSVSLAL (160 aa)). N-linked (GlcNAc...) asparagine glycosylation is found at N29, N119, N173, N264, N268, N281, and N320. Residues 259-557 (VTVNQNGTGN…FTVENFLLGD (299 aa)) are pectinesterase 41. T336 contributes to the substrate binding site. N-linked (GlcNAc...) asparagine glycosylation is present at N353. Q366 is a substrate binding site. Catalysis depends on D389, which acts as the Proton donor; for pectinesterase activity. C403 and C423 form a disulfide bridge. D410 acts as the Nucleophile; for pectinesterase activity in catalysis. Residues N456 and N469 are each glycosylated (N-linked (GlcNAc...) asparagine). Substrate-binding residues include R478 and W480. N520, N541, and N547 each carry an N-linked (GlcNAc...) asparagine glycan.

The protein in the N-terminal section; belongs to the PMEI family. It in the C-terminal section; belongs to the pectinesterase family. Expressed in flowers, siliques, floral stems and rosettes leaves.

The protein resides in the secreted. It localises to the cell wall. The enzyme catalyses [(1-&gt;4)-alpha-D-galacturonosyl methyl ester](n) + n H2O = [(1-&gt;4)-alpha-D-galacturonosyl](n) + n methanol + n H(+). It functions in the pathway glycan metabolism; pectin degradation; 2-dehydro-3-deoxy-D-gluconate from pectin: step 1/5. Functionally, acts in the modification of cell walls via demethylesterification of cell wall pectin. The chain is Probable pectinesterase/pectinesterase inhibitor 41 (PME41) from Arabidopsis thaliana (Mouse-ear cress).